We begin with the raw amino-acid sequence, 423 residues long: Gamma-glutamyl phosphate reductase (423 aa).

It belongs to the gamma-glutamyl phosphate reductase family.

The protein localises to the cytoplasm. The enzyme catalyses L-glutamate 5-semialdehyde + phosphate + NADP(+) = L-glutamyl 5-phosphate + NADPH + H(+). The protein operates within amino-acid biosynthesis; L-proline biosynthesis; L-glutamate 5-semialdehyde from L-glutamate: step 2/2. Functionally, catalyzes the NADPH-dependent reduction of L-glutamate 5-phosphate into L-glutamate 5-semialdehyde and phosphate. The product spontaneously undergoes cyclization to form 1-pyrroline-5-carboxylate. This is Gamma-glutamyl phosphate reductase from Paramagnetospirillum magneticum (strain ATCC 700264 / AMB-1) (Magnetospirillum magneticum).